The primary structure comprises 226 residues: Orotate phosphoribosyltransferase (226 aa).

Lys-30 lines the 5-phospho-alpha-D-ribose 1-diphosphate pocket. 38 to 39 serves as a coordination point for orotate; the sequence is FF. 5-phospho-alpha-D-ribose 1-diphosphate-binding positions include 76-77, Arg-106, Lys-107, Lys-110, His-112, and 132-140; these read YK and DDVMTAGTA. Residues Thr-136 and Arg-164 each coordinate orotate.

Belongs to the purine/pyrimidine phosphoribosyltransferase family. PyrE subfamily. In terms of assembly, homodimer.

It catalyses the reaction orotidine 5'-phosphate + diphosphate = orotate + 5-phospho-alpha-D-ribose 1-diphosphate. Its pathway is pyrimidine metabolism; UMP biosynthesis via de novo pathway; UMP from orotate: step 1/2. Functionally, catalyzes the transfer of a ribosyl phosphate group from 5-phosphoribose 1-diphosphate to orotate, leading to the formation of orotidine monophosphate (OMP). This Kluyveromyces lactis (strain ATCC 8585 / CBS 2359 / DSM 70799 / NBRC 1267 / NRRL Y-1140 / WM37) (Yeast) protein is Orotate phosphoribosyltransferase (URA5).